A 141-amino-acid polypeptide reads, in one-letter code: Hemoglobin subunit alpha (141 aa).

A Globin domain is found at 1–141 (VLSSADKNNV…VSTVLTSKYR (141 aa)). The residue at position 3 (serine 3) is a Phosphoserine. N6-succinyllysine occurs at positions 7 and 11. Position 16 is an N6-acetyllysine; alternate (lysine 16). Position 16 is an N6-succinyllysine; alternate (lysine 16). Tyrosine 24 carries the post-translational modification Phosphotyrosine. Phosphoserine is present on serine 35. Lysine 40 carries the N6-succinyllysine modification. Serine 49 carries the phosphoserine modification. Histidine 58 lines the O2 pocket. Histidine 87 contributes to the heme b binding site. The residue at position 102 (serine 102) is a Phosphoserine. Threonine 108 carries the phosphothreonine modification. Serine 124 bears the Phosphoserine mark. A phosphothreonine mark is found at threonine 134 and threonine 137. Serine 138 carries the post-translational modification Phosphoserine.

This sequence belongs to the globin family. Heterotetramer of two alpha chains and two beta chains. In terms of tissue distribution, red blood cells.

Involved in oxygen transport from the lung to the various peripheral tissues. Its function is as follows. Hemopressin acts as an antagonist peptide of the cannabinoid receptor CNR1. Hemopressin-binding efficiently blocks cannabinoid receptor CNR1 and subsequent signaling. This chain is Hemoglobin subunit alpha (HBA), found in Panthera pardus saxicolor (Northern Persian leopard).